The primary structure comprises 346 residues: tRNA N6-adenosine threonylcarbamoyltransferase (346 aa).

His-111 and His-115 together coordinate Fe cation. Substrate is bound by residues 134–138 (LVSGG), Asp-167, Gly-180, and Asn-279. Asp-307 contacts Fe cation.

The protein belongs to the KAE1 / TsaD family. Fe(2+) serves as cofactor.

It localises to the cytoplasm. The catalysed reaction is L-threonylcarbamoyladenylate + adenosine(37) in tRNA = N(6)-L-threonylcarbamoyladenosine(37) in tRNA + AMP + H(+). Its function is as follows. Required for the formation of a threonylcarbamoyl group on adenosine at position 37 (t(6)A37) in tRNAs that read codons beginning with adenine. Is involved in the transfer of the threonylcarbamoyl moiety of threonylcarbamoyl-AMP (TC-AMP) to the N6 group of A37, together with TsaE and TsaB. TsaD likely plays a direct catalytic role in this reaction. The chain is tRNA N6-adenosine threonylcarbamoyltransferase from Burkholderia multivorans (strain ATCC 17616 / 249).